Reading from the N-terminus, the 641-residue chain is Chaperone protein HtpG (641 aa).

The interval 1-351 (MTQSVHAETH…SNDLPLNVSR (351 aa)) is a; substrate-binding. The tract at residues 352-568 (EILQDNKVTV…AHGMSTQMIK (217 aa)) is b. Positions 569–641 (LMRAAGQPVP…SRINRLLLQA (73 aa)) are c.

This sequence belongs to the heat shock protein 90 family. As to quaternary structure, homodimer.

It is found in the cytoplasm. Its function is as follows. Molecular chaperone. Has ATPase activity. In Aeromonas hydrophila subsp. hydrophila (strain ATCC 7966 / DSM 30187 / BCRC 13018 / CCUG 14551 / JCM 1027 / KCTC 2358 / NCIMB 9240 / NCTC 8049), this protein is Chaperone protein HtpG.